The chain runs to 584 residues: uncharacterized protein (584 aa).

Disordered stretches follow at residues 151-188 (EHPP…DNDL), 222-243 (KRKE…SRAN), 399-418 (SETP…PPDF), and 433-584 (MQPS…AKSD). Residues 159–188 (TSSEKTRSENRERKKRWREQNEERNKDNDL) show a composition bias toward basic and acidic residues. A compositionally biased stretch (low complexity) spans 231–243 (LSQNQSSNASRAN). Polar residues-rich tracts occupy residues 399-409 (SETPTPVSGNG), 433-453 (MQPS…SSEM), 483-500 (NAVT…SGSP), 511-531 (NYSQ…SSLP), and 572-584 (QRSS…AKSD).

This is an uncharacterized protein from Schizosaccharomyces pombe (strain 972 / ATCC 24843) (Fission yeast).